Reading from the N-terminus, the 97-residue chain is MEIIKDALAGTLESSDVMVRIGPCDEPGIHLELESLVKQQFGNAIERVARETLAKLGVERAHVVIDDKGALECVLRARVQAAVMRAAEQTEIQWGAI.

Ser-14 carries the O-(phosphoribosyl dephospho-coenzyme A)serine modification.

This sequence belongs to the CitD family. Oligomer with a subunit composition of (alpha,beta,gamma)6.

It localises to the cytoplasm. Functionally, covalent carrier of the coenzyme of citrate lyase. This is Citrate lyase acyl carrier protein from Escherichia fergusonii (strain ATCC 35469 / DSM 13698 / CCUG 18766 / IAM 14443 / JCM 21226 / LMG 7866 / NBRC 102419 / NCTC 12128 / CDC 0568-73).